We begin with the raw amino-acid sequence, 77 residues long: U8-lycotoxin-Ls1f (77 aa).

The signal sequence occupies residues 1-20; sequence MKLIIFTGLVLFAIVSLIEV. A propeptide spanning residues 21 to 26 is cleaved from the precursor; it reads QADNER.

This sequence belongs to the neurotoxin 19 (CSTX) family. 08 (U8-Lctx) subfamily. Contains 4 disulfide bonds. Expressed by the venom gland.

The protein resides in the secreted. In Lycosa singoriensis (Wolf spider), this protein is U8-lycotoxin-Ls1f.